Here is a 241-residue protein sequence, read N- to C-terminus: Triosephosphate isomerase (241 aa).

Substrate is bound at residue 9–11; the sequence is NWK. H96 functions as the Electrophile in the catalytic mechanism. The active-site Proton acceptor is the E165. Substrate-binding positions include G171, S204, and 225–226; that span reads GG.

This sequence belongs to the triosephosphate isomerase family. In terms of assembly, homodimer.

The protein localises to the cytoplasm. The catalysed reaction is D-glyceraldehyde 3-phosphate = dihydroxyacetone phosphate. It functions in the pathway carbohydrate biosynthesis; gluconeogenesis. Its pathway is carbohydrate degradation; glycolysis; D-glyceraldehyde 3-phosphate from glycerone phosphate: step 1/1. In terms of biological role, involved in the gluconeogenesis. Catalyzes stereospecifically the conversion of dihydroxyacetone phosphate (DHAP) to D-glyceraldehyde-3-phosphate (G3P). The polypeptide is Triosephosphate isomerase (Prochlorococcus marinus (strain MIT 9301)).